A 149-amino-acid chain; its full sequence is Oligosaccharyltransferase complex subunit OSTC (149 aa).

Topologically, residues 1-32 (METLYRVPFLVLECPNLKLKKPPWVHMPSAMT) are cytoplasmic. Residues 33-53 (VYALVVVSYFLITGGIIYDVI) traverse the membrane as a helical segment. Residues 54–83 (VEPPSVGSMTDEHGHQRPVAFLAYRVNGQY) are Extracellular-facing. A helical transmembrane segment spans residues 84 to 104 (IMEGLASSFLFTMGGLGFIIL). Topologically, residues 105-117 (DRSNAPNIPKLNR) are cytoplasmic. A helical membrane pass occupies residues 118–138 (FLLLFIGFVCVLLSFFMARVF). The Extracellular portion of the chain corresponds to 139–149 (MRMKLPGYLMG).

It belongs to the OSTC family. Component of STT3A-containing oligosaccharyl transferase (OST-A) complex. STT3A-containing complex assembly occurs through the formation of 3 subcomplexes. Subcomplex 1 contains RPN1 and TMEM258, subcomplex 2 contains the STT3A-specific subunits STT3A, DC2/OSTC, and KCP2 as well as the core subunit OST4, and subcomplex 3 contains RPN2, DAD1, and OST48. The OST-A complex can form stable complexes with the Sec61 complex or with both the Sec61 and TRAP complexes. Interacts with PSEN1 and NCSTN; indicative for an association with the gamma-secretase complex.

It localises to the endoplasmic reticulum. It is found in the membrane. The protein operates within protein modification; protein glycosylation. Functionally, subunit of STT3A-containing oligosaccharyl transferase (OST-A) complex that catalyzes the initial transfer of a defined glycan (Glc(3)Man(9)GlcNAc(2) in eukaryotes) from the lipid carrier dolichol-pyrophosphate to an asparagine residue within an Asn-X-Ser/Thr consensus motif in nascent polypeptide chains, the first step in protein N-glycosylation. N-glycosylation occurs cotranslationally and the complex associates with the Sec61 complex at the channel-forming translocon complex that mediates protein translocation across the endoplasmic reticulum (ER). Within the OST-A complex, acts as an adapter that anchors the OST-A complex to the Sec61 complex. May be involved in N-glycosylation of APP (amyloid-beta precursor protein). Can modulate gamma-secretase cleavage of APP by enhancing endoprotelysis of PSEN1. The protein is Oligosaccharyltransferase complex subunit OSTC of Canis lupus familiaris (Dog).